Consider the following 55-residue polypeptide: Large ribosomal subunit protein bL33 (55 aa).

Belongs to the bacterial ribosomal protein bL33 family.

The protein is Large ribosomal subunit protein bL33 of Xanthomonas axonopodis pv. citri (strain 306).